The sequence spans 29 residues: uncharacterized protein (29 aa).

The segment at 1 to 29 is disordered; it reads MFKMKFGDTLPRSDFGTGGNKQAPGLELG.

This is an uncharacterized protein from Saccharomyces cerevisiae (strain ATCC 204508 / S288c) (Baker's yeast).